A 120-amino-acid polypeptide reads, in one-letter code: Ribosome-binding factor A (120 aa).

Belongs to the RbfA family. In terms of assembly, monomer. Binds 30S ribosomal subunits, but not 50S ribosomal subunits or 70S ribosomes.

Its subcellular location is the cytoplasm. In terms of biological role, one of several proteins that assist in the late maturation steps of the functional core of the 30S ribosomal subunit. Associates with free 30S ribosomal subunits (but not with 30S subunits that are part of 70S ribosomes or polysomes). Required for efficient processing of 16S rRNA. May interact with the 5'-terminal helix region of 16S rRNA. The chain is Ribosome-binding factor A from Rickettsia conorii (strain ATCC VR-613 / Malish 7).